Here is a 266-residue protein sequence, read N- to C-terminus: Glucosamine-6-phosphate deaminase (266 aa).

Aspartate 67 acts as the Proton acceptor; for enolization step in catalysis. Asparagine 139 serves as the catalytic For ring-opening step. The active-site Proton acceptor; for ring-opening step is histidine 141. Glutamate 146 serves as the catalytic For ring-opening step.

Belongs to the glucosamine/galactosamine-6-phosphate isomerase family. NagB subfamily. In terms of assembly, homohexamer.

It catalyses the reaction alpha-D-glucosamine 6-phosphate + H2O = beta-D-fructose 6-phosphate + NH4(+). Its pathway is amino-sugar metabolism; N-acetylneuraminate degradation; D-fructose 6-phosphate from N-acetylneuraminate: step 5/5. In terms of biological role, catalyzes the reversible isomerization-deamination of glucosamine 6-phosphate (GlcN6P) to form fructose 6-phosphate (Fru6P) and ammonium ion. This Marinomonas sp. (strain MWYL1) protein is Glucosamine-6-phosphate deaminase.